Here is a 492-residue protein sequence, read N- to C-terminus: MNRIRIHVLPTNRGRITPVPRSQEPLSCAFTHRPCSQPRLEGQEFCIKHILEDKDAPFKQCSYISTKNGKRCPNAAPKPEKKDGVSFCAEHVRRNALALHAQMKKTNPGPMGETLLCQLSSYAKTELGSQTPESSRSEASRILDEDSWSDGEQEPITVDQTWRGDPDSEADSIDSDQEDPLKHAGVYTAEEVALIMREKLIRLQSLYIDQFKRLQHLLKEKKRRYLHNRKVEHEALGSSLLTGPEGLLAKERENLKRLKCLRRYRQRYGVEALLHRQLKERRMLATDGAAQQAHTTRSSQRCLAFVDDVRCSNQSLPMTRHCLTHICQDTNQVLFKCCQGSEEVPCNKPVPVSLSEDPCCPLHFQLPPQMYKPEQVLSVPDDLEAGPMDLYLSAAELQPTESLPLEFSDDLDVVGDGMQCPPSPLLFDPSLTLEDHLVKEIAEDPVDILGQMQMAGDGCRSQGSRNSEKGSAPLSQSGLATANGKPEPTSIS.

Lys-78 participates in a covalent cross-link: Glycyl lysine isopeptide (Lys-Gly) (interchain with G-Cter in SUMO2). Positions 127–182 (LGSQTPESSRSEASRILDEDSWSDGEQEPITVDQTWRGDPDSEADSIDSDQEDPLK) are disordered. The residue at position 131 (Thr-131) is a Phosphothreonine. A compositionally biased stretch (basic and acidic residues) spans 135 to 144 (SRSEASRILD). Residues Ser-147, Ser-149, Ser-168, Ser-172, and Ser-175 each carry the phosphoserine modification. Over residues 167-178 (DSEADSIDSDQE) the composition is skewed to acidic residues. A required for interaction with other NSL complex members region spans residues 308 to 364 (DVRCSNQSLPMTRHCLTHICQDTNQVLFKCCQGSEEVPCNKPVPVSLSEDPCCPLHF). Residues 455-492 (AGDGCRSQGSRNSEKGSAPLSQSGLATANGKPEPTSIS) are disordered.

As to quaternary structure, component of the NSL complex at least composed of KAT8/MOF, KANSL1, KANSL2, KANSL3, MCRS1, PHF20, OGT1/OGT, WDR5 and HCFC1.

It localises to the nucleus. The protein localises to the mitochondrion. Functionally, non-catalytic component of the NSL histone acetyltransferase complex, a multiprotein complex that mediates histone H4 acetylation at 'Lys-5'- and 'Lys-8' (H4K5ac and H4K8ac) at transcription start sites and promotes transcription initiation. Required for NSL complex stability and for transcription of intraciliary transport genes in both ciliated and non-ciliated cells by regulating histone H4 acetylation at 'Lys-5'- and 'Lys-12' (H4K5ac and H4K12ac). This is necessary for cilium assembly in ciliated cells and for organization of the microtubule cytoskeleton in non-ciliated cells. Required within the NSL complex to maintain nuclear architecture stability by promoting KAT8-mediated acetylation of lamin LMNA. The sequence is that of KAT8 regulatory NSL complex subunit 2 (KANSL2) from Pongo abelii (Sumatran orangutan).